We begin with the raw amino-acid sequence, 160 residues long: Cyclic pyranopterin monophosphate synthase (160 aa).

Substrate is bound by residues leucine 73–histidine 75 and methionine 110–glutamate 111. Residue aspartate 125 is part of the active site.

Belongs to the MoaC family. Homohexamer; trimer of dimers.

It catalyses the reaction (8S)-3',8-cyclo-7,8-dihydroguanosine 5'-triphosphate = cyclic pyranopterin phosphate + diphosphate. Its pathway is cofactor biosynthesis; molybdopterin biosynthesis. Catalyzes the conversion of (8S)-3',8-cyclo-7,8-dihydroguanosine 5'-triphosphate to cyclic pyranopterin monophosphate (cPMP). The chain is Cyclic pyranopterin monophosphate synthase from Pseudomonas aeruginosa (strain LESB58).